A 469-amino-acid chain; its full sequence is IAA-alanine resistance protein 1 (469 aa).

The signal sequence occupies residues 1-28; the sequence is MSFSLRKLLVPILVLVLFLDLCVESGFS. The segment at 33–58 is disordered; it reads ARDDHVHHHGGGCSHSHDHDHDHDHD. The segment covering 47–58 has biased composition (basic and acidic residues); that stretch reads HSHDHDHDHDHD. 2 consecutive transmembrane segments (helical) span residues 114–134 and 141–161; these read CSLLVSLASLICLVLLPIMFV and WFVDSLALFGAGAMLGDAFLH. The interval 170–197 is disordered; that stretch reads GHSHSNDHHENHDHHDHSHSDSPSHSHS. The span at 173-193 shows a compositional bias: basic and acidic residues; the sequence is HSNDHHENHDHHDHSHSDSPS. A helical transmembrane segment spans residues 201 to 221; the sequence is LSVGLSVLAGIVVFLLVEKLV. The disordered stretch occupies residues 228 to 315; sequence SSGSNTWGHH…GKSDKPEQVE (88 aa). The span at 235–246 shows a compositional bias: basic residues; it reads GHHHHHHHAGSK. Basic and acidic residues predominate over residues 247-256; the sequence is KLKDEGDHNN. Over residues 257-279 the composition is skewed to polar residues; sequence LDQQSSSDAIVNSSEKVSGGSTD. Residues 292-315 show a composition bias toward basic and acidic residues; that stretch reads ATDKSDSGTEITSDGKSDKPEQVE. Transmembrane regions (helical) follow at residues 387 to 407, 415 to 435, and 448 to 468; these read LFFNFLSALVALAGTALVLVW, SLIEGFTAGGFIYIAVAGVLA, and SACHLISLILGMSVALCISLI.

It belongs to the ZIP transporter (TC 2.A.5) family. KE4/Catsup subfamily.

The protein resides in the membrane. Its function is as follows. May participate in auxin metabolism or response. Probable transporter. This Arabidopsis thaliana (Mouse-ear cress) protein is IAA-alanine resistance protein 1 (IAR1).